We begin with the raw amino-acid sequence, 254 residues long: Acidic endochitinase (254 aa).

The N-terminal stretch at 1 to 23 (MKFWGSVLALSFVVFLFLTGTLA) is a signal peptide. Catalysis depends on Glu91, which acts as the Proton donor. A disulfide bridge links Cys213 with Cys245.

It belongs to the glycosyl hydrolase 19 family. Chitinase class II subfamily.

It is found in the secreted. The enzyme catalyses Random endo-hydrolysis of N-acetyl-beta-D-glucosaminide (1-&gt;4)-beta-linkages in chitin and chitodextrins.. Functionally, defense against chitin-containing fungal pathogens. In Petunia hybrida (Petunia), this protein is Acidic endochitinase.